A 602-amino-acid chain; its full sequence is Multidrug and toxin extrusion protein 2 (602 aa).

At 1 to 33 the chain is on the cytoplasmic side; sequence MDSLQDTVALDHGGCCPALSRLVPRGFGTEMWT. Residues 34-54 form a helical membrane-spanning segment; it reads LFALSGPLFLFQVLTFMIYIV. Residues 55-66 lie on the Extracellular side of the membrane; it reads STVFCGHLGKVE. The chain crosses the membrane as a helical span at residues 67–87; that stretch reads LASVTLAVAFVNVCGVSVGVG. Residues 88-119 lie on the Cytoplasmic side of the membrane; the sequence is LSSACDTLMSQSFGSPNKKHVGVILQRGALVL. The chain crosses the membrane as a helical span at residues 120–140; that stretch reads LLCCLPCWALFLNTQHILLLF. At 141–153 the chain is on the extracellular side; sequence RQDPDVSRLTQDY. Residues 154 to 174 traverse the membrane as a helical segment; sequence VMIFIPGLPVIFLYNLLAKYL. The Cytoplasmic segment spans residues 175-219; it reads QNQGWLKGQEEESPFQTPGLSILHPSHSHLSRASFHLFQKITWPQ. Residues 220–240 traverse the membrane as a helical segment; that stretch reads VLSGVVGNCVNGVANYALVSV. Topologically, residues 241–248 are extracellular; it reads LNLGVRGS. Residues 249 to 269 traverse the membrane as a helical segment; that stretch reads AYANIISQFAQTVFLLLYIVL. Topologically, residues 270–289 are cytoplasmic; it reads KKLHLETWAGWSSQCLQDWG. Residues 290–309 traverse the membrane as a helical segment; sequence PFFSLAVPSMLMICVEWWAY. The Extracellular segment spans residues 310 to 327; it reads EIGSFLMGLLSVVDLSAQ. The chain crosses the membrane as a helical span at residues 328 to 348; the sequence is AVIYEVATVTYMIPLGLSIGV. The Cytoplasmic portion of the chain corresponds to 349-368; it reads CVRVGMALGAADTVQAKRSA. A helical membrane pass occupies residues 369–389; that stretch reads VSGVLSIVGISLVLGTLISIL. Residues 390–402 are Extracellular-facing; that stretch reads KNQLGHIFTNDED. The helical transmembrane segment at 403–423 threads the bilayer; the sequence is VIALVSQVLPVYSVFHVFEAI. Residues 424 to 442 lie on the Cytoplasmic side of the membrane; sequence CCVYGGVLRGTGKQAFGAA. Residues 443–463 traverse the membrane as a helical segment; the sequence is VNAITYYIIGLPLGILLTFVV. At 464–466 the chain is on the extracellular side; the sequence is RMR. A helical transmembrane segment spans residues 467–487; it reads IMGLWLGMLACVFLATAAFVA. Over 488–578 the chain is Cytoplasmic; sequence YTARLDWKLA…LSVKQLVIRR (91 aa). The interval 503–529 is disordered; that stretch reads KHSGRQQQQRAESTATRPGPEKAVLSS. The segment covering 507 to 518 has biased composition (polar residues); it reads RQQQQRAESTAT. A helical membrane pass occupies residues 579–599; it reads GAALGAASATLMVGLTVRILA. The Extracellular segment spans residues 600–602; that stretch reads TRH.

It belongs to the multi antimicrobial extrusion (MATE) (TC 2.A.66.1) family. High expression in kidney. Very small expression in adrenal gland and lung. In terms of tissue distribution, high expression in kidney. Very small expression in brain and testis. As to expression, ubiquitously expressed in all tissues examined except the kidney.

It localises to the cell membrane. The protein resides in the apical cell membrane. It carries out the reaction thiamine(out) + H(+)(in) = thiamine(in) + H(+)(out). It catalyses the reaction estrone 3-sulfate(in) + H(+)(out) = estrone 3-sulfate(out) + H(+)(in). The catalysed reaction is creatinine(in) + H(+)(out) = creatinine(out) + H(+)(in). In terms of biological role, multidrug efflux pump that functions as a H(+)/organic cation antiporter. Mediates the efflux of cationic compounds, such as the model cations, tetraethylammonium (TEA) and 1-methyl-4-phenylpyridinium (MPP+), the platinum-based drug oxaliplatin or weak bases that are positively charged at physiological pH, cimetidine, the platinum-based drugs cisplatin and oxaliplatin or the antidiabetic drug metformin. Mediates the efflux of endogenous compounds such as, creatinine, thiamine and estrone-3-sulfate. Plays a physiological role in the excretion of drugs, toxins and endogenous metabolites through the kidney. Non-functional protein. The chain is Multidrug and toxin extrusion protein 2 from Homo sapiens (Human).